Consider the following 129-residue polypeptide: Glycine cleavage system H protein (129 aa).

In terms of domain architecture, Lipoyl-binding spans 24–106 (TYTVGITEHA…YAGGWIFKIK (83 aa)). Position 65 is an N6-lipoyllysine (Lys65).

It belongs to the GcvH family. In terms of assembly, the glycine cleavage system is composed of four proteins: P, T, L and H. The cofactor is (R)-lipoate.

In terms of biological role, the glycine cleavage system catalyzes the degradation of glycine. The H protein shuttles the methylamine group of glycine from the P protein to the T protein. This Citrobacter koseri (strain ATCC BAA-895 / CDC 4225-83 / SGSC4696) protein is Glycine cleavage system H protein.